The sequence spans 188 residues: Large ribosomal subunit protein bL32m (188 aa).

Zn(2+) is bound by residues Cys-110, Cys-113, Cys-123, and Cys-126. The disordered stretch occupies residues 162-188 (GETPSEHDQGKRIIERERKRPSWFTQN). A compositionally biased stretch (basic and acidic residues) spans 165–181 (PSEHDQGKRIIERERKR).

It belongs to the bacterial ribosomal protein bL32 family. Component of the mitochondrial ribosome large subunit (39S) which comprises a 16S rRNA and about 50 distinct proteins. MRPL32 precursor is processed by the m-AAA protease (composed of AFG3L2 and SPG7), which cleaves the N-terminal transit peptide. Cleavage by the m-AAA protease takes place prior to assembly into the large subunit, an essential step for mitochondrial ribosome (mitoribosome) assembly. Proper processing by the m-AAA protease is dependent on the zinc-binding region within the tightly folded C-terminal domain of MRPL32: zinc-dependent folding halts degradation initiated from the N-terminus and triggers the release of mature MRPL32.

It localises to the mitochondrion. In terms of biological role, component of the mitochondrial large ribosomal subunit (mt-LSU). The mitochondrial ribosome (mitoribosome) is a large ribonucleoprotein complex responsible for the synthesis of proteins inside mitochondria. The protein is Large ribosomal subunit protein bL32m (MRPL32) of Bos taurus (Bovine).